The primary structure comprises 403 residues: DNA primase DnaG (403 aa).

The Toprim domain occupies 172 to 248; sequence DSVIIVEGRA…HIDYIARAPP (77 aa). The Mg(2+) site is built by E178, D222, and D224. Positions 279–300 are disordered; it reads AAGEKTEAPAQPTQQQPPPAEA.

It belongs to the archaeal DnaG primase family. As to quaternary structure, forms a ternary complex with MCM helicase and DNA. Component of the archaeal exosome complex. The cofactor is Mg(2+).

The catalysed reaction is ssDNA + n NTP = ssDNA/pppN(pN)n-1 hybrid + (n-1) diphosphate.. Functionally, RNA polymerase that catalyzes the synthesis of short RNA molecules used as primers for DNA polymerase during DNA replication. Also part of the exosome, which is a complex involved in RNA degradation. Acts as a poly(A)-binding protein that enhances the interaction between heteromeric, adenine-rich transcripts and the exosome. The chain is DNA primase DnaG from Pyrobaculum neutrophilum (strain DSM 2338 / JCM 9278 / NBRC 100436 / V24Sta) (Thermoproteus neutrophilus).